The following is a 479-amino-acid chain: Glutamyl-tRNA(Gln) amidotransferase subunit A (479 aa).

Residues Lys71 and Ser146 each act as charge relay system in the active site. Ser170 (acyl-ester intermediate) is an active-site residue.

It belongs to the amidase family. GatA subfamily. As to quaternary structure, heterotrimer of A, B and C subunits.

The enzyme catalyses L-glutamyl-tRNA(Gln) + L-glutamine + ATP + H2O = L-glutaminyl-tRNA(Gln) + L-glutamate + ADP + phosphate + H(+). Its function is as follows. Allows the formation of correctly charged Gln-tRNA(Gln) through the transamidation of misacylated Glu-tRNA(Gln) in organisms which lack glutaminyl-tRNA synthetase. The reaction takes place in the presence of glutamine and ATP through an activated gamma-phospho-Glu-tRNA(Gln). The protein is Glutamyl-tRNA(Gln) amidotransferase subunit A of Lactobacillus acidophilus (strain ATCC 700396 / NCK56 / N2 / NCFM).